We begin with the raw amino-acid sequence, 312 residues long: MEAGNQTGFLEFILLGLSEDPELQPFIFGLFLSMYLVTVLGNLLIILAISSDSHLHTPMYFFLSNLSWVDICFSTCIVPKMLVNIQTENKAISYMDCLTQVYFSMFFPILDTLLLTVMAYDRFVAVCHPLHYMIIMNPHLCGLLVFVTWLIGVMTSLLHISLMMHLIFCKDFEIPHFFCELTYILQLACSDTFLNSTLIYFMTGVLGVFPLLGIIFSYSRIASSIRKMSSSGGKQKALSTCGSHLSVVSLFYGTGIGVHFTSAVTHSSQKISVASVMYTVVTPMLNPFIYSLRNKDVKGALGSLLSRAASCL.

The Extracellular portion of the chain corresponds to 1–25; it reads MEAGNQTGFLEFILLGLSEDPELQP. A glycan (N-linked (GlcNAc...) asparagine) is linked at Asn5. A helical transmembrane segment spans residues 26–46; that stretch reads FIFGLFLSMYLVTVLGNLLII. Residues 47 to 54 are Cytoplasmic-facing; sequence LAISSDSH. A helical transmembrane segment spans residues 55-75; the sequence is LHTPMYFFLSNLSWVDICFST. Over 76–99 the chain is Extracellular; that stretch reads CIVPKMLVNIQTENKAISYMDCLT. A disulfide bridge connects residues Cys97 and Cys189. The chain crosses the membrane as a helical span at residues 100–120; sequence QVYFSMFFPILDTLLLTVMAY. Residues 121–139 lie on the Cytoplasmic side of the membrane; sequence DRFVAVCHPLHYMIIMNPH. Residues 140–160 traverse the membrane as a helical segment; that stretch reads LCGLLVFVTWLIGVMTSLLHI. Over 161–197 the chain is Extracellular; sequence SLMMHLIFCKDFEIPHFFCELTYILQLACSDTFLNST. The chain crosses the membrane as a helical span at residues 198–217; that stretch reads LIYFMTGVLGVFPLLGIIFS. Residues 218–237 lie on the Cytoplasmic side of the membrane; it reads YSRIASSIRKMSSSGGKQKA. The chain crosses the membrane as a helical span at residues 238–258; the sequence is LSTCGSHLSVVSLFYGTGIGV. The Extracellular segment spans residues 259 to 271; sequence HFTSAVTHSSQKI. Residues 272-292 form a helical membrane-spanning segment; that stretch reads SVASVMYTVVTPMLNPFIYSL. Residues 293-312 are Cytoplasmic-facing; sequence RNKDVKGALGSLLSRAASCL.

This sequence belongs to the G-protein coupled receptor 1 family.

It localises to the cell membrane. Functionally, odorant receptor. The chain is Olfactory receptor 7D2 (OR7D2) from Homo sapiens (Human).